The chain runs to 278 residues: NH(3)-dependent NAD(+) synthetase (278 aa).

ATP is bound at residue 43–50 (GISGGVDS). A Mg(2+)-binding site is contributed by Asp-49. Arg-146 contributes to the deamido-NAD(+) binding site. ATP is bound at residue Thr-166. A Mg(2+)-binding site is contributed by Glu-171. Positions 179 and 186 each coordinate deamido-NAD(+). Residues Lys-195 and Thr-217 each contribute to the ATP site. 266-267 (HK) is a deamido-NAD(+) binding site.

This sequence belongs to the NAD synthetase family. In terms of assembly, homodimer.

The catalysed reaction is deamido-NAD(+) + NH4(+) + ATP = AMP + diphosphate + NAD(+) + H(+). It functions in the pathway cofactor biosynthesis; NAD(+) biosynthesis; NAD(+) from deamido-NAD(+) (ammonia route): step 1/1. Functionally, catalyzes the ATP-dependent amidation of deamido-NAD to form NAD. Uses ammonia as a nitrogen source. The chain is NH(3)-dependent NAD(+) synthetase from Pseudoalteromonas translucida (strain TAC 125).